The sequence spans 264 residues: Somatomedin-B and thrombospondin type-1 domain-containing protein (264 aa).

An N-terminal signal peptide occupies residues 1–20 (MRTLWMALCALSRLWPGAQA). In terms of domain architecture, SMB spans 24-75 (EAGRCCPGRDPACFARGWRLDRVYGTCFCDQACRFTGDCCFDYDRACPARPC). 7 disulfides stabilise this stretch: cysteine 28-cysteine 36, cysteine 28-cysteine 52, cysteine 36-cysteine 70, cysteine 50-cysteine 52, cysteine 50-cysteine 63, cysteine 56-cysteine 62, and cysteine 63-cysteine 70. Residues 74–127 (PCFVGEWSPWSGCADQCKPTTRVRRRSVQQEPQNGGAPCPPLEERAGCLEYSTP) form the TSP type-1 domain. N-linked (GlcNAc...) asparagine glycosylation is present at asparagine 227.

Belongs to the thrombospondin family. Detected in aorta extracellular matrix (at protein level).

It is found in the secreted. The protein localises to the extracellular space. Its subcellular location is the extracellular matrix. This is Somatomedin-B and thrombospondin type-1 domain-containing protein (SBSPON) from Homo sapiens (Human).